A 187-amino-acid polypeptide reads, in one-letter code: Oligoribonuclease (187 aa).

The region spanning leucine 7 to leucine 170 is the Exonuclease domain. Tyrosine 128 is an active-site residue.

This sequence belongs to the oligoribonuclease family.

The protein localises to the cytoplasm. Functionally, 3'-to-5' exoribonuclease specific for small oligoribonucleotides. The polypeptide is Oligoribonuclease (Legionella pneumophila (strain Paris)).